Here is a 607-residue protein sequence, read N- to C-terminus: Pyruvate decarboxylase 1 (607 aa).

The substrate site is built by D69 and H156. The interval 434 to 516 (DSWFNCQKLK…FLINNGGYTI (83 aa)) is thiamine pyrophosphate binding. Residues D484, N511, and G513 each coordinate Mg(2+). A substrate-binding site is contributed by E517.

It belongs to the TPP enzyme family. As to quaternary structure, homotetramer. A metal cation is required as a cofactor. The cofactor is thiamine diphosphate. Highly expressed in seeds, and at lower levels in roots and siliques.

The catalysed reaction is a 2-oxocarboxylate + H(+) = an aldehyde + CO2. Functionally, may play a role in ethanolic fermentation during anoxia. The sequence is that of Pyruvate decarboxylase 1 (PDC1) from Arabidopsis thaliana (Mouse-ear cress).